The sequence spans 291 residues: MLQEKLTMNRDFLNLINESLLNKYHPAQSRLHEAINYSLSAGGKRIRPLLVLTTLDSLGGNAHDGLPFGIALEMIHTYSLIHDDLPAMDNDDYRRGKLTNHKRFDEATAILAGDALLTDAFQCILNTQLNAEIKLSLINLLSTASGSNGMVYGQMLDMQGEHKTLTLNELERIHIHKTGELIRAAIVSAGIIMNFNDAQIEQLNIIGKNVGLMFQIKDDILDVEGSFENIGKTVGSDLNNDKSTYVSLLGLEASKQLLNDKLTETYDALKTLQPINDNLKTLITYIVERNK.

Isopentenyl diphosphate is bound by residues lysine 44, arginine 47, and histidine 76. Mg(2+) contacts are provided by aspartate 83 and aspartate 89. Position 94 (arginine 94) interacts with (2E)-geranyl diphosphate. Residue arginine 95 coordinates isopentenyl diphosphate. Lysine 177, threonine 178, glutamine 215, and lysine 232 together coordinate (2E)-geranyl diphosphate.

It belongs to the FPP/GGPP synthase family. Requires Mg(2+) as cofactor.

It localises to the cytoplasm. It catalyses the reaction isopentenyl diphosphate + (2E)-geranyl diphosphate = (2E,6E)-farnesyl diphosphate + diphosphate. The protein is Farnesyl diphosphate synthase (fps) of Micrococcus luteus (Micrococcus lysodeikticus).